Here is a 333-residue protein sequence, read N- to C-terminus: Acyl-CoA wax alcohol acyltransferase 2 (333 aa).

3 consecutive transmembrane segments (helical) span residues 15-35, 38-58, and 130-150; these read VFAL…VIIV, YLVV…WLAF, and TFPG…VPFL.

The protein belongs to the diacylglycerol acyltransferase family. As to quaternary structure, monomer. In terms of tissue distribution, expressed in Mueller cells of the retina (at protein level). Abundant in tissues rich in sebaceous glands such as the preputial gland and eyelid.

It is found in the endoplasmic reticulum membrane. It catalyses the reaction a long chain fatty alcohol + a fatty acyl-CoA = a wax ester + CoA. The enzyme catalyses all-trans-retinol + an acyl-CoA = an all-trans-retinyl ester + CoA. It carries out the reaction an acyl-CoA + a 1,2-diacyl-sn-glycerol = a triacyl-sn-glycerol + CoA. The catalysed reaction is 9-cis-retinol + a fatty acyl-CoA = 9-cis-retinyl ester + CoA. It catalyses the reaction 11-cis-retinol + a fatty acyl-CoA = 11-cis-retinyl ester + CoA. The enzyme catalyses 13-cis-retinol + a fatty acyl-CoA = 13-cis-retinyl ester + CoA. It carries out the reaction a 1-acylglycerol + an acyl-CoA = a 1,2-diacylglycerol + CoA. The catalysed reaction is 1-O-alkylglycerol + an acyl-CoA = 1-O-alkyl-3-acylglycerol + CoA. It catalyses the reaction a 2-acylglycerol + an acyl-CoA = a 1,2-diacyl-sn-glycerol + CoA. The enzyme catalyses 2-(9Z-octadecenoyl)-glycerol + hexadecanoyl-CoA = 1-hexadecanoyl-2-(9Z-octadecenoyl)-sn-glycerol + CoA. It carries out the reaction 1,2-di-(9Z-octadecenoyl)-sn-glycerol + hexadecanoyl-CoA = 1,2-di-(9Z)-octadecenoyl-3-hexadecanoyl-sn-glycerol + CoA. The catalysed reaction is hexadecan-1-ol + hexadecanoyl-CoA = hexadecanyl hexadecanoate + CoA. It catalyses the reaction hexadecane-1,2-diol + hexadecanoyl-CoA = 2-hydroxyhexadecyl hexadecanoate + CoA. The enzyme catalyses all-trans-retinol + hexadecanoyl-CoA = all-trans-retinyl hexadecanoate + CoA. It carries out the reaction 1,2-di-(9Z-octadecenoyl)-sn-glycerol + (9Z)-octadecenoyl-CoA = 1,2,3-tri-(9Z-octadecenoyl)-glycerol + CoA. The catalysed reaction is hexadecan-1-ol + (9Z)-octadecenoyl-CoA = hexadecanyl (9Z)-octadecenoate + CoA. It catalyses the reaction (9Z)-hexadecen-1-ol + (9Z)-octadecenoyl-CoA = 1-O-(9Z)-hexadecenyl (9Z)-octadecenoate + CoA. The enzyme catalyses octadecan-1-ol + (9Z)-octadecenoyl-CoA = 1-O-octadecyl (9Z)-octadecenoate + CoA. It carries out the reaction (9Z)-octadecen-1-ol + (9Z)-octadecenoyl-CoA = 1-O-(9Z)-octadecenyl (9Z)-octadecenoate + CoA. The catalysed reaction is hexadecan-1-ol + (9Z)-hexadecenoyl-CoA = 1-O-hexadecyl (9Z)-hexadecenoate + CoA. It catalyses the reaction hexadecan-1-ol + octadecanoyl-CoA = hexadecanyl octadecanoate + CoA. The enzyme catalyses 11-cis-retinol + hexadecanoyl-CoA = 11-cis-retinyl hexadecanoate + CoA. It carries out the reaction 1-O-(9Z-octadecenyl)-glycerol + (9Z)-octadecenoyl-CoA = 1-O-(9Z-octadecyl)-3-(9Z-octadecenoyl)-glycerol + CoA. The catalysed reaction is 1-(9Z-octadecenoyl)-glycerol + (9Z)-octadecenoyl-CoA = 1,2-di-(9Z-octadecenoyl)-glycerol + CoA. It catalyses the reaction 11-cis-retinol + tetradecanoyl-CoA = 11-cis-retinyl tetradecanoate + CoA. The enzyme catalyses 9-cis-retinol + tetradecanoyl-CoA = 9-cis-retinyl tetradecanoate + CoA. It carries out the reaction 9-cis-retinol + hexadecanoyl-CoA = 9-cis-retinyl hexadecanoate + CoA. The catalysed reaction is 13-cis-retinol + tetradecanoyl-CoA = 13-cis-retinyl tetradecanoate + CoA. It catalyses the reaction all-trans-retinol + tetradecanoyl-CoA = all-trans-retinyl tetradecanoate + CoA. The enzyme catalyses tetradecan-1-ol + tetradecanoyl-CoA = tetradecanyl tetradecanoate + CoA. Its activity is regulated as follows. 11-cis retinoids act as allosteric modulators of acyl-CoA retinol O-fatty-acyltransferase (ARAT) activity by suppressing esterification of 9-cis, 13-cis, or all-trans retinols concurrently increasing the enzyme specificity toward 11-cis isomer. In terms of biological role, acyltransferase that catalyzes the formation of ester bonds between fatty alcohols and fatty acyl-CoAs to form wax monoesters. Shows a preference for medium chain acyl-CoAs from C12 to C16 in length and fatty alcohols shorter than C20, as the acyl donor and acceptor, respectively. Also possesses fatty acyl-CoA retinol acyltransferase (ARAT) activity that preferentially esterifies 11-cis-retinol, a chromophore precursor of bleached opsin pigments in cone cells. Shows higher catalytic efficiency toward 11-cis-retinol versus 9-cis-retinol, 13- cis-retinol and all-trans-retinol substrates. This Mus musculus (Mouse) protein is Acyl-CoA wax alcohol acyltransferase 2 (Awat2).